A 185-amino-acid chain; its full sequence is uncharacterized protein (185 aa).

An N-terminal signal peptide occupies residues 1–24 (MPCNRAVFGAFVLALLISLQSVYF). Residues 50 to 70 (VAVNVIVEFSFDILFFLCGLL) traverse the membrane as a helical segment. Residues 96–113 (ELEHVSSRRRNDSRDDST) show a composition bias toward basic and acidic residues. The disordered stretch occupies residues 96–185 (ELEHVSSRRR…LFTAGGIGLP (90 aa)). Over residues 114-126 (VRNVSKTSPLASQ) the composition is skewed to polar residues. The span at 127–138 (RSRDHFDGDPRE) shows a compositional bias: basic and acidic residues. Positions 139 to 155 (PAPPAYSPADFYPPPAS) are enriched in pro residues.

Its subcellular location is the host membrane. This is an uncharacterized protein from Colorado tick fever virus (strain USA/Florio N-7180) (CTFV).